We begin with the raw amino-acid sequence, 287 residues long: Formamidopyrimidine-DNA glycosylase (287 aa).

Pro-2 serves as the catalytic Schiff-base intermediate with DNA. The active-site Proton donor is the Glu-3. Lys-61 acts as the Proton donor; for beta-elimination activity in catalysis. DNA-binding residues include His-95, Arg-115, and Arg-157. An FPG-type zinc finger spans residues 243-277 (NVYGRADQPCRRCGEPVRREAFMNRSSFSCPRCQP). Catalysis depends on Arg-267, which acts as the Proton donor; for delta-elimination activity.

This sequence belongs to the FPG family. In terms of assembly, monomer. It depends on Zn(2+) as a cofactor.

The catalysed reaction is Hydrolysis of DNA containing ring-opened 7-methylguanine residues, releasing 2,6-diamino-4-hydroxy-5-(N-methyl)formamidopyrimidine.. It carries out the reaction 2'-deoxyribonucleotide-(2'-deoxyribose 5'-phosphate)-2'-deoxyribonucleotide-DNA = a 3'-end 2'-deoxyribonucleotide-(2,3-dehydro-2,3-deoxyribose 5'-phosphate)-DNA + a 5'-end 5'-phospho-2'-deoxyribonucleoside-DNA + H(+). Its function is as follows. Involved in base excision repair of DNA damaged by oxidation or by mutagenic agents. Acts as a DNA glycosylase that recognizes and removes damaged bases. Has a preference for oxidized purines, such as 7,8-dihydro-8-oxoguanine (8-oxoG). Has AP (apurinic/apyrimidinic) lyase activity and introduces nicks in the DNA strand. Cleaves the DNA backbone by beta-delta elimination to generate a single-strand break at the site of the removed base with both 3'- and 5'-phosphates. The protein is Formamidopyrimidine-DNA glycosylase of Salinispora tropica (strain ATCC BAA-916 / DSM 44818 / JCM 13857 / NBRC 105044 / CNB-440).